Consider the following 375-residue polypeptide: Queuine tRNA-ribosyltransferase (375 aa).

Asp-90 acts as the Proton acceptor in catalysis. Residues 90–94, Asp-144, Gln-190, and Gly-217 contribute to the substrate site; that span reads DSGGF. The tract at residues 248-254 is RNA binding; that stretch reads GIGTPHY. The Nucleophile role is filled by Asp-267. The segment at 272–276 is RNA binding; important for wobble base 34 recognition; the sequence is TRIAR. 4 residues coordinate Zn(2+): Cys-305, Cys-307, Cys-310, and His-336.

This sequence belongs to the queuine tRNA-ribosyltransferase family. Homodimer. Within each dimer, one monomer is responsible for RNA recognition and catalysis, while the other monomer binds to the replacement base PreQ1. It depends on Zn(2+) as a cofactor.

It catalyses the reaction 7-aminomethyl-7-carbaguanine + guanosine(34) in tRNA = 7-aminomethyl-7-carbaguanosine(34) in tRNA + guanine. The protein operates within tRNA modification; tRNA-queuosine biosynthesis. Its function is as follows. Catalyzes the base-exchange of a guanine (G) residue with the queuine precursor 7-aminomethyl-7-deazaguanine (PreQ1) at position 34 (anticodon wobble position) in tRNAs with GU(N) anticodons (tRNA-Asp, -Asn, -His and -Tyr). Catalysis occurs through a double-displacement mechanism. The nucleophile active site attacks the C1' of nucleotide 34 to detach the guanine base from the RNA, forming a covalent enzyme-RNA intermediate. The proton acceptor active site deprotonates the incoming PreQ1, allowing a nucleophilic attack on the C1' of the ribose to form the product. After dissociation, two additional enzymatic reactions on the tRNA convert PreQ1 to queuine (Q), resulting in the hypermodified nucleoside queuosine (7-(((4,5-cis-dihydroxy-2-cyclopenten-1-yl)amino)methyl)-7-deazaguanosine). This is Queuine tRNA-ribosyltransferase from Borrelia recurrentis (strain A1).